The primary structure comprises 545 residues: Phospholipase B-like 1 (545 aa).

Positions 1-35 (MSRHSQDERLGLPQPPALLPLLLLLLAVAVPLSQA) are cleaved as a signal peptide. N-linked (GlcNAc...) (high mannose) asparagine; alternate glycosylation is present at asparagine 68. Asparagine 68 is a glycosylation site (N-linked (GlcNAc...) (hybrid) asparagine; alternate). Positions 206–224 (LSPTKNSSLKFFKRWDMGH) are cleaved as a propeptide — removed in mature form. Asparagine 305, asparagine 363, and asparagine 408 each carry an N-linked (GlcNAc...) (high mannose) asparagine; alternate glycan. Asparagine 305, asparagine 363, and asparagine 408 each carry an N-linked (GlcNAc...) (hybrid) asparagine; alternate glycan. Disulfide bonds link cysteine 467/cysteine 472 and cysteine 471/cysteine 486. The N-linked (GlcNAc...) (high mannose) asparagine; alternate glycan is linked to asparagine 523. The N-linked (GlcNAc...) (hybrid) asparagine; alternate glycan is linked to asparagine 523.

Belongs to the phospholipase B-like family. In terms of assembly, may form a homodimer, each monomer is composed of a chain A and a chain B. In terms of processing, the maturation cleavages that produces chains A and B are required to open the putative substrate binding pocket. Both chains A and B remain associated in the mature protein.

It localises to the lysosome. Its function is as follows. Exhibits a weak phospholipase activity, acting on various phospholipids, including phosphatidylcholine, phosphatidylinositol, phosphatidylethanolamine and lysophospholipids. However, in view of the small size of the putative binding pocket, it has been proposed that it may act rather as an amidase or a peptidase. This Bos taurus (Bovine) protein is Phospholipase B-like 1 (PLBD1).